A 470-amino-acid chain; its full sequence is Origin of replication complex subunit 4 (470 aa).

An ATP-binding site is contributed by 63 to 70 (GPRGCGKA).

The protein belongs to the ORC4 family. As to quaternary structure, component of the origin recognition complex (ORC) composed of at least ORC1, ORC2, ORC3, ORC4, ORC5 and ORC6. ORC is regulated in a cell-cycle and development dependent manner. It is sequentially assembled at the exit from anaphase of mitosis and disassembled as cells enter S phase. In terms of tissue distribution, expressed in the shoot apical meristem (SAM), leaves, ears and roots (including root tips).

Its subcellular location is the nucleus. Component of the origin recognition complex (ORC) that binds origins of replication. DNA-binding is ATP-dependent. The specific DNA sequences that define origins of replication have not been identified yet. ORC is required to assemble the pre-replication complex necessary to initiate DNA replication. In Oryza sativa subsp. japonica (Rice), this protein is Origin of replication complex subunit 4.